The sequence spans 152 residues: Probable ribose-5-phosphate isomerase B (152 aa).

12-13 (DH) contributes to the D-ribulose 5-phosphate binding site. Cys-70 serves as the catalytic Proton acceptor. Residue 71-75 (GTGVG) participates in D-ribulose 5-phosphate binding. His-103 serves as the catalytic Proton donor. 4 residues coordinate D-ribulose 5-phosphate: Asp-104, Arg-114, Arg-137, and Arg-141.

The protein belongs to the LacAB/RpiB family. As to quaternary structure, homodimer.

The enzyme catalyses aldehydo-D-ribose 5-phosphate = D-ribulose 5-phosphate. Its pathway is carbohydrate degradation; pentose phosphate pathway; D-ribose 5-phosphate from D-ribulose 5-phosphate (non-oxidative stage): step 1/1. Catalyzes the interconversion of ribulose-5-P and ribose-5-P. The chain is Probable ribose-5-phosphate isomerase B from Mycoplasma pneumoniae (strain ATCC 29342 / M129 / Subtype 1) (Mycoplasmoides pneumoniae).